A 647-amino-acid chain; its full sequence is Pollen receptor-like kinase 2 (647 aa).

The first 21 residues, Met-1–Gly-21, serve as a signal peptide directing secretion. 5 LRR repeats span residues Leu-87 to Lys-109, Leu-110 to Gly-134, Gly-136 to Ser-159, Lys-161 to Pro-183, and Met-185 to Thr-203. The chain crosses the membrane as a helical span at residues Ile-248–Phe-268. In terms of domain architecture, Protein kinase spans Lys-338–Met-613. Ser-340 carries the phosphoserine modification. ATP is bound by residues Leu-344–Ser-352 and Lys-366. Ser-418 carries the phosphoserine modification. Phosphothreonine is present on Thr-438. Residue Tyr-508 is modified to Phosphotyrosine. Positions Asp-620–Ser-647 are disordered. Residues Arg-637–Ser-647 are compositionally biased toward polar residues.

It belongs to the protein kinase superfamily. Ser/Thr protein kinase family. Part of a complex containing ROPGEF1 and ARAC11/ROP1. The interaction between PRK2, ROPGEF1 and ARAC11/ROP1 is phosphorylation-independent. Interacts with ROPGEF12 (via C-terminus). Interacts with ROPGEF1 (via PRONE domain). Expressed in pollen and/or in flowers, but not in leaves. Expressed in pollen tube.

The protein localises to the cell membrane. It carries out the reaction L-seryl-[protein] + ATP = O-phospho-L-seryl-[protein] + ADP + H(+). The enzyme catalyses L-threonyl-[protein] + ATP = O-phospho-L-threonyl-[protein] + ADP + H(+). Its activity is regulated as follows. The phosphorylation activity is calcium-independent. In terms of biological role, receptor-like kinase involved in the control of pollen germination and pollen tube polar growth. Phosphorylates ROPGEF1 in its C-terminal region, releasing its auto-inhibition, and thereby activating the ROP1 signaling pathway. May act as a scaffolding protein, recruiting ROPGEF12 to the plasma membrane by binding to its C-terminal domain. Phosphorylates ROPGEF12, releasing its auto-inhibition. The protein is Pollen receptor-like kinase 2 of Arabidopsis thaliana (Mouse-ear cress).